A 350-amino-acid polypeptide reads, in one-letter code: Phenylalanine--tRNA ligase alpha subunit (350 aa).

Position 259 (Glu-259) interacts with Mg(2+).

It belongs to the class-II aminoacyl-tRNA synthetase family. Phe-tRNA synthetase alpha subunit type 1 subfamily. As to quaternary structure, tetramer of two alpha and two beta subunits. Mg(2+) serves as cofactor.

It is found in the cytoplasm. The enzyme catalyses tRNA(Phe) + L-phenylalanine + ATP = L-phenylalanyl-tRNA(Phe) + AMP + diphosphate + H(+). The polypeptide is Phenylalanine--tRNA ligase alpha subunit (pheS) (Rickettsia prowazekii (strain Madrid E)).